The following is a 184-amino-acid chain: Nucleoside triphosphate pyrophosphatase (184 aa).

Asp-66 acts as the Proton acceptor in catalysis.

Belongs to the Maf family. The cofactor is a divalent metal cation.

The protein resides in the cytoplasm. The enzyme catalyses a ribonucleoside 5'-triphosphate + H2O = a ribonucleoside 5'-phosphate + diphosphate + H(+). It carries out the reaction a 2'-deoxyribonucleoside 5'-triphosphate + H2O = a 2'-deoxyribonucleoside 5'-phosphate + diphosphate + H(+). Functionally, nucleoside triphosphate pyrophosphatase. May have a dual role in cell division arrest and in preventing the incorporation of modified nucleotides into cellular nucleic acids. The sequence is that of Nucleoside triphosphate pyrophosphatase from Prochlorococcus marinus (strain MIT 9313).